A 1056-amino-acid polypeptide reads, in one-letter code: Ribosomal protein S6 kinase delta-1 (1056 aa).

Residues 8–132 enclose the PX domain; that stretch reads SADLARFYTV…DFFKGGVISD (125 aa). The segment at 204–223 is disordered; that stretch reads VGAVASDSEPSRVEDRESRS. Positions 212 to 222 are enriched in basic and acidic residues; the sequence is EPSRVEDRESR. Residues 276–304 form the MIT domain; sequence VQGESSPTRREAVKRRTAEYLMRAESICS. Phosphoserine is present on residues S281, S422, S423, S426, S446, S448, and S454. The 102-residue stretch at 343 to 444 folds into the Protein kinase 1 domain; that stretch reads GVIDKVLLVM…SMPPRVCLQQ (102 aa). Residues 426-504 are disordered; the sequence is SLDIKEGRPS…KWLDSGSSSE (79 aa). A compositionally biased stretch (low complexity) spans 443–454; that stretch reads QQPSASPQGGSS. Over residues 473–482 the composition is skewed to polar residues; that stretch reads TSLTPSSQDD. Residues S493 and S527 each carry the phosphoserine modification. The interval 529 to 588 is disordered; it reads SEESVMQPEGDKADTQAVSSPASLATGSVSPSTHLRVFSGGEDLEAVSSPPTSESLSRSK. Residues 544-561 show a composition bias toward polar residues; it reads QAVSSPASLATGSVSPST. Residues 576–587 are compositionally biased toward low complexity; sequence SSPPTSESLSRS. Phosphoserine occurs at positions 577, 599, 602, 634, 655, 658, 661, and 787. Residues 628 to 662 are disordered; the sequence is TLEDGDSPSQSLDPGESKRESEAQDSVSRGSDDSV. A Protein kinase 2 domain is found at 789–1046; that stretch reads RSESDRLGQV…VEDIKSHPFF (258 aa). ATP-binding positions include 795-803 and K823; that span reads LGQVEVVVT. Catalysis depends on D919, which acts as the Proton acceptor.

Belongs to the protein kinase superfamily. Ser/Thr protein kinase family. S6 kinase subfamily. In terms of assembly, interacts with SPHK1 and phosphatidylinositol 3-phosphate. Interacts (via PX domain) with PRDX3.

Its subcellular location is the cytoplasm. It localises to the membrane. It is found in the early endosome. It carries out the reaction L-seryl-[protein] + ATP = O-phospho-L-seryl-[protein] + ADP + H(+). The catalysed reaction is L-threonyl-[protein] + ATP = O-phospho-L-threonyl-[protein] + ADP + H(+). Functionally, may be involved in transmitting sphingosine-1 phosphate (SPP)-mediated signaling into the cell. Plays a role in the recruitment of PRDX3 to early endosomes. The protein is Ribosomal protein S6 kinase delta-1 (Rps6kc1) of Mus musculus (Mouse).